The sequence spans 302 residues: N-acetylmuramic acid 6-phosphate etherase (302 aa).

An SIS domain is found at 57–220 (IADRFRSNGR…TTGAMIRIGK (164 aa)). Glutamate 85 serves as the catalytic Proton donor. Residue glutamate 116 is part of the active site.

The protein belongs to the GCKR-like family. MurNAc-6-P etherase subfamily. Homodimer.

The enzyme catalyses N-acetyl-D-muramate 6-phosphate + H2O = N-acetyl-D-glucosamine 6-phosphate + (R)-lactate. The protein operates within amino-sugar metabolism; N-acetylmuramate degradation. Specifically catalyzes the cleavage of the D-lactyl ether substituent of MurNAc 6-phosphate, producing GlcNAc 6-phosphate and D-lactate. The protein is N-acetylmuramic acid 6-phosphate etherase of Rhodopirellula baltica (strain DSM 10527 / NCIMB 13988 / SH1).